The chain runs to 211 residues: uncharacterized protein (211 aa).

This is an uncharacterized protein from Dictyostelium discoideum (Social amoeba).